A 56-amino-acid polypeptide reads, in one-letter code: uncharacterized protein (56 aa).

2 consecutive transmembrane segments (helical) span residues 5 to 23 (VLIF…YWIY) and 33 to 55 (ITAG…ILGW).

It localises to the cell membrane. This is an uncharacterized protein from Archaeoglobus fulgidus (strain ATCC 49558 / DSM 4304 / JCM 9628 / NBRC 100126 / VC-16).